The sequence spans 136 residues: Calmodulin-A (136 aa).

EF-hand domains lie at 1–36 (EQIA…LGQN), 37–72 (PTEA…KMKD), 74–109 (DSEE…LGEK), and 110–136 (LTDE…EEFV). Ca(2+)-binding residues include Asp-14, Asp-16, Asp-18, Thr-20, Glu-25, Asp-50, Asp-52, Asn-54, Thr-56, Glu-61, Asp-87, Asp-89, Asn-91, Tyr-93, and Glu-98. At Lys-109 the chain carries N6,N6,N6-trimethyllysine. Ca(2+) contacts are provided by Asp-123, Asp-125, Asp-127, Gln-129, and Glu-134.

It belongs to the calmodulin family.

In terms of biological role, calmodulin acts as part of a calcium signal transduction pathway by mediating the control of a large number of enzymes, ion channels, aquaporins and other proteins through calcium-binding. Calcium-binding is required for the activation of calmodulin. Among the enzymes to be stimulated by the calmodulin-calcium complex are a number of protein kinases, such as myosin light-chain kinases and calmodulin-dependent protein kinase type II (CaMK2), and phosphatases. In Oryzias latipes (Japanese rice fish), this protein is Calmodulin-A (calm1).